Here is a 627-residue protein sequence, read N- to C-terminus: Putative polyketide hydroxylase (627 aa).

FAD contacts are provided by residues 22–51 (PVLV…LVER) and 309–319 (YRSGRVLLAGD). The disordered stretch occupies residues 370–469 (AEATSARAAH…GGGPGGGGPQ (100 aa)). Over residues 395 to 469 (AGGGGPGAGT…GGGPGGGGPQ (75 aa)) the composition is skewed to gly residues.

It belongs to the PheA/TfdB FAD monooxygenase family. The cofactor is FAD.

Involved in developmentally regulated synthesis of a compound biosynthetically related to polyketide antibiotics which is essential for spore color in Streptococcus coelicolor. This chain is Putative polyketide hydroxylase, found in Streptomyces coelicolor (strain ATCC BAA-471 / A3(2) / M145).